The chain runs to 407 residues: Putative colanic acid biosynthesis glycosyl transferase WcaI (407 aa).

It functions in the pathway slime biogenesis; slime polysaccharide biosynthesis. This chain is Putative colanic acid biosynthesis glycosyl transferase WcaI (wcaI), found in Escherichia coli (strain K12).